Here is a 346-residue protein sequence, read N- to C-terminus: 4-hydroxy-2-oxovalerate aldolase (346 aa).

The 253-residue stretch at 8–260 (VTLHDMSLRD…ETGIDLYKIM (253 aa)) folds into the Pyruvate carboxyltransferase domain. 16-17 (RD) contributes to the substrate binding site. Residue aspartate 17 participates in Mn(2+) binding. Catalysis depends on histidine 20, which acts as the Proton acceptor. 2 residues coordinate substrate: serine 170 and histidine 199. Mn(2+) contacts are provided by histidine 199 and histidine 201. Residue tyrosine 290 participates in substrate binding.

This sequence belongs to the 4-hydroxy-2-oxovalerate aldolase family.

It catalyses the reaction (S)-4-hydroxy-2-oxopentanoate = acetaldehyde + pyruvate. The sequence is that of 4-hydroxy-2-oxovalerate aldolase (nahM) from Stutzerimonas stutzeri (Pseudomonas stutzeri).